Consider the following 239-residue polypeptide: Probable inner membrane transporter protein TsaS (239 aa).

4 helical membrane-spanning segments follow: residues 65–85, 128–148, 160–180, and 186–206; these read AIGAILPGMAVGALIGLWLMG, GLVGVLEVMFATAGPMVIALL, ATVPVVMVVAASIAIAVLFGA, and AHTFERWLVALPIAFMGVVLG.

It belongs to the 4-toluene sulfonate uptake permease (TSUP) (TC 2.A.102) family. In terms of assembly, part of a two-component transport system composed of TsaT and TsaS.

The protein localises to the cell inner membrane. In terms of biological role, involved in the uptake of p-toluenesulphonate (TSA). This is Probable inner membrane transporter protein TsaS (tsaS) from Comamonas testosteroni (Pseudomonas testosteroni).